Consider the following 533-residue polypeptide: Sterol 26-hydroxylase, mitochondrial (533 aa).

A mitochondrion-targeting transit peptide spans M1 to A32. Residues I34–A60 are disordered. 5 positions are modified to N6-acetyllysine: K142, K232, K285, K296, and K375. The tract at residues P386–P400 is sterol-binding. C479 serves as a coordination point for heme. K512 and K523 each carry N6-acetyllysine.

The protein belongs to the cytochrome P450 family. As to quaternary structure, interacts with HSP70; this interaction is required for initial targeting to mitochondria. Requires heme as cofactor. Acetylation of Lys-125 and Lys-285 is observed in liver mitochondria from fasted mice but not from fed mice. Expressed in the gray and white matter of cerebellum (at protein level).

The protein resides in the mitochondrion inner membrane. It catalyses the reaction 5beta-cholestane-3alpha,7alpha,12alpha-triol + 6 reduced [adrenodoxin] + 3 O2 + 5 H(+) = (25R)-3alpha,7alpha,12alpha-trihydroxy-5beta-cholestan-26-oate + 6 oxidized [adrenodoxin] + 4 H2O. It carries out the reaction cholestanol + 2 reduced [adrenodoxin] + O2 + 2 H(+) = (25R)-26-hydroxycholestanol + 2 oxidized [adrenodoxin] + H2O. The catalysed reaction is (25R)-3beta-hydroxycholest-5-en-7-one-26-al + 2 reduced [adrenodoxin] + O2 + H(+) = (25R)-3beta-hydroxycholest-5-en-7-one-26-oate + 2 oxidized [adrenodoxin] + H2O. The enzyme catalyses (25R)-3beta,26-dihydroxycholest-5-en-7-one + 2 reduced [adrenodoxin] + O2 + 2 H(+) = (25R)-3beta-hydroxycholest-5-en-7-one-26-al + 2 oxidized [adrenodoxin] + 2 H2O. It catalyses the reaction 7-oxocholesterol + 2 reduced [adrenodoxin] + O2 + 2 H(+) = (25R)-3beta,26-dihydroxycholest-5-en-7-one + 2 oxidized [adrenodoxin] + H2O. It carries out the reaction calciol + 2 reduced [adrenodoxin] + O2 + 2 H(+) = calcidiol + 2 oxidized [adrenodoxin] + H2O. The catalysed reaction is (25R)-5beta-cholestane-3alpha,7alpha,12alpha,26-tetrol + 2 reduced [adrenodoxin] + O2 + 2 H(+) = (25R)-3alpha,7alpha,12alpha-trihydroxy-5beta-cholestan-26-al + 2 oxidized [adrenodoxin] + 2 H2O. The enzyme catalyses 2 reduced [adrenodoxin] + cholesterol + O2 + 2 H(+) = (25R)-cholest-5-ene-3beta,26-diol + 2 oxidized [adrenodoxin] + H2O. It catalyses the reaction (25R)-3beta,4beta-dihydroxycholest-5-en-26-al + 2 reduced [adrenodoxin] + O2 + H(+) = (25R)-3beta,4beta-dihydroxycholest-5-en-26-oate + 2 oxidized [adrenodoxin] + H2O. It carries out the reaction (25R)-4beta,26-dihydroxycholesterol + 2 reduced [adrenodoxin] + O2 + 2 H(+) = (25R)-3beta,4beta-dihydroxycholest-5-en-26-al + 2 oxidized [adrenodoxin] + 2 H2O. The catalysed reaction is 4beta-hydroxycholesterol + 2 reduced [adrenodoxin] + O2 + 2 H(+) = (25R)-4beta,26-dihydroxycholesterol + 2 oxidized [adrenodoxin] + H2O. The enzyme catalyses (25R)-3beta-hydroxy-5-cholesten-26-al + 2 reduced [adrenodoxin] + O2 + H(+) = (25R)-3beta-hydroxy-5-cholestenoate + 2 oxidized [adrenodoxin] + H2O. It catalyses the reaction (25R)-cholest-5-ene-3beta,26-diol + 2 reduced [adrenodoxin] + O2 + 2 H(+) = (25R)-3beta-hydroxy-5-cholesten-26-al + 2 oxidized [adrenodoxin] + 2 H2O. It carries out the reaction (25R)-3alpha,7alpha,12alpha-trihydroxy-5beta-cholestan-26-al + 2 reduced [adrenodoxin] + O2 + H(+) = (25R)-3alpha,7alpha,12alpha-trihydroxy-5beta-cholestan-26-oate + 2 oxidized [adrenodoxin] + H2O. The catalysed reaction is 5beta-cholestane-3alpha,7alpha,12alpha-triol + 2 reduced [adrenodoxin] + O2 + 2 H(+) = (25R)-5beta-cholestane-3alpha,7alpha,12alpha,26-tetrol + 2 oxidized [adrenodoxin] + H2O. It functions in the pathway hormone biosynthesis; cholecalciferol biosynthesis. It participates in steroid metabolism; cholesterol degradation. The protein operates within lipid metabolism; bile acid biosynthesis. Its function is as follows. Cytochrome P450 monooxygenase that catalyzes regio- and stereospecific hydroxylation of cholesterol and its derivatives. Hydroxylates (with R stereochemistry) the terminal methyl group of cholesterol side-chain in a three step reaction to yield at first a C26 alcohol, then a C26 aldehyde and finally a C26 acid. Regulates cholesterol homeostasis by catalyzing the conversion of excess cholesterol to bile acids via both the 'neutral' (classic) and the 'acid' (alternative) pathways. May also regulate cholesterol homeostasis via generation of active oxysterols, which act as ligands for NR1H2 and NR1H3 nuclear receptors, modulating the transcription of genes involved in lipid metabolism. Plays a role in cholestanol metabolism in the cerebellum. Similarly to cholesterol, hydroxylates cholestanol and may facilitate sterol diffusion through the blood-brain barrier to the systemic circulation for further degradation. Also hydroxylates retinal 7-ketocholesterol, a noxious oxysterol with pro-inflammatory and pro-apoptotic effects, and may play a role in its elimination from the retinal pigment epithelium. May play a redundant role in vitamin D biosynthesis. Catalyzes 25-hydroxylation of vitamin D3 that is required for its conversion to a functionally active form. The sequence is that of Sterol 26-hydroxylase, mitochondrial from Mus musculus (Mouse).